Consider the following 209-residue polypeptide: V-type ATP synthase subunit D (209 aa).

It belongs to the V-ATPase D subunit family.

In terms of biological role, produces ATP from ADP in the presence of a proton gradient across the membrane. The sequence is that of V-type ATP synthase subunit D from Anaeromyxobacter sp. (strain K).